Here is a 528-residue protein sequence, read N- to C-terminus: Na(+)/H(+) antiporter NhaB (528 aa).

10 helical membrane passes run 25–47 (IISF…GWLL), 66–86 (PGGL…SQVL), 97–117 (LLLV…LFVF), 130–164 (VSLL…FYSI), 241–261 (IRMS…CFLV), 304–324 (AFIG…VGLI), 351–371 (ALPF…IIDL), 390–410 (LVVF…VFVG), 448–468 (ATPN…APLI), and 476–496 (VWMA…AIQL).

Belongs to the NhaB Na(+)/H(+) (TC 2.A.34) antiporter family.

It localises to the cell inner membrane. It catalyses the reaction 2 Na(+)(in) + 3 H(+)(out) = 2 Na(+)(out) + 3 H(+)(in). Na(+)/H(+) antiporter that extrudes sodium in exchange for external protons. The polypeptide is Na(+)/H(+) antiporter NhaB (Shewanella halifaxensis (strain HAW-EB4)).